The primary structure comprises 367 residues: Histidinol-phosphate aminotransferase (367 aa).

N6-(pyridoxal phosphate)lysine is present on K222.

It belongs to the class-II pyridoxal-phosphate-dependent aminotransferase family. Histidinol-phosphate aminotransferase subfamily. Requires pyridoxal 5'-phosphate as cofactor.

It carries out the reaction L-histidinol phosphate + 2-oxoglutarate = 3-(imidazol-4-yl)-2-oxopropyl phosphate + L-glutamate. The protein operates within amino-acid biosynthesis; L-histidine biosynthesis; L-histidine from 5-phospho-alpha-D-ribose 1-diphosphate: step 7/9. This chain is Histidinol-phosphate aminotransferase, found in Methanosphaera stadtmanae (strain ATCC 43021 / DSM 3091 / JCM 11832 / MCB-3).